The primary structure comprises 418 residues: Glutamyl-tRNA reductase (418 aa).

Residues 49 to 52, Ser107, 112 to 114, and Gln118 each bind substrate; these read TCNR and EPQ. Cys50 functions as the Nucleophile in the catalytic mechanism. 187 to 192 contacts NADP(+); that stretch reads GAGETI.

It belongs to the glutamyl-tRNA reductase family. Homodimer.

It carries out the reaction (S)-4-amino-5-oxopentanoate + tRNA(Glu) + NADP(+) = L-glutamyl-tRNA(Glu) + NADPH + H(+). It participates in porphyrin-containing compound metabolism; protoporphyrin-IX biosynthesis; 5-aminolevulinate from L-glutamyl-tRNA(Glu): step 1/2. Functionally, catalyzes the NADPH-dependent reduction of glutamyl-tRNA(Glu) to glutamate 1-semialdehyde (GSA). The sequence is that of Glutamyl-tRNA reductase from Vibrio parahaemolyticus serotype O3:K6 (strain RIMD 2210633).